A 159-amino-acid chain; its full sequence is Transcriptional repressor NrdR (159 aa).

A zinc finger spans residues cysteine 3–cysteine 34. In terms of domain architecture, ATP-cone spans proline 49 to aspartate 139.

It belongs to the NrdR family. The cofactor is Zn(2+).

Functionally, negatively regulates transcription of bacterial ribonucleotide reductase nrd genes and operons by binding to NrdR-boxes. The polypeptide is Transcriptional repressor NrdR (Nitrosospira multiformis (strain ATCC 25196 / NCIMB 11849 / C 71)).